Reading from the N-terminus, the 468-residue chain is Acetyl-CoA decarbonylase/synthase complex subunit gamma (468 aa).

A 4Fe-4S domain is found at 1–60 (MKINSPLEAYKYLPQTNCGECGEATCMAFASKLIDRSGKTSDCPPLIKEKKFAKKLAELD). Residues Cys18, Cys21, Cys26, and Cys43 each contribute to the [4Fe-4S] cluster site.

As to quaternary structure, heterodimer of delta and gamma chains. The ACDS complex is made up of alpha, epsilon, beta, gamma and delta chains with a probable stoichiometry of (alpha(2)epsilon(2))(4)-beta(8)-(gamma(1)delta(1))(8). Corrinoid is required as a cofactor. [4Fe-4S] cluster serves as cofactor.

The catalysed reaction is 5,6,7,8-tetrahydrosarcinapterin + methyl-Co(III)-[corrinoid Fe-S protein] = 5-methyltetrahydrosarcinapterin + Co(I)-[corrinoid Fe-S protein] + H(+). The protein operates within one-carbon metabolism; methanogenesis from acetate. Its function is as follows. Part of a complex that catalyzes the reversible cleavage of acetyl-CoA, allowing growth on acetate as sole source of carbon and energy. The sequence is that of Acetyl-CoA decarbonylase/synthase complex subunit gamma from Methanosarcina acetivorans (strain ATCC 35395 / DSM 2834 / JCM 12185 / C2A).